The following is a 338-amino-acid chain: UPF0194 membrane protein in asrC 5'region (338 aa).

The first 23 residues, 1-23, serve as a signal peptide directing secretion; it reads MAISPKKRALALVVVLIVAGAVA. Residues 148–207 adopt a coiled-coil conformation; it reads KQSLDNAAAALKTARANLDRAQQALTLAIKGPRKEDIAAARQQLQADKAGLSLARRELTD.

This sequence belongs to the UPF0194 family.

It is found in the periplasm. This is UPF0194 membrane protein in asrC 5'region from Acidithiobacillus ferridurans.